The primary structure comprises 340 residues: Fructose-1,6-bisphosphatase class 1 (340 aa).

Mg(2+) contacts are provided by glutamate 107, aspartate 126, leucine 128, and aspartate 129. Asparagine 215 lines the substrate pocket. Glutamate 287 contacts Mg(2+).

The protein belongs to the FBPase class 1 family. Homotetramer. The cofactor is Mg(2+).

It is found in the cytoplasm. The catalysed reaction is beta-D-fructose 1,6-bisphosphate + H2O = beta-D-fructose 6-phosphate + phosphate. It functions in the pathway carbohydrate biosynthesis; gluconeogenesis. This is Fructose-1,6-bisphosphatase class 1 from Brucella anthropi (strain ATCC 49188 / DSM 6882 / CCUG 24695 / JCM 21032 / LMG 3331 / NBRC 15819 / NCTC 12168 / Alc 37) (Ochrobactrum anthropi).